Reading from the N-terminus, the 931-residue chain is Scaffold attachment factor B1 (931 aa).

Residues 1-24 (MAETLSGLGDSGAASAAAVSSAAS) are compositionally biased toward low complexity. The segment at 1–35 (MAETLSGLGDSGAASAAAVSSAASETGTRRLSDLR) is disordered. Ala2 bears the N-acetylalanine mark. Residues Ser24 and Ser55 each carry the phosphoserine modification. In terms of domain architecture, SAP spans 31-65 (LSDLRVIDLRAELRKRNLTSSGNKSVLMERLKKAI). Residues 64-121 (AIEEEGGNPDEIEVISEGNKKMPKRPSKGKKPEDEGVEDNGLEENSGDGQEDVETSLE) form a disordered region. Residues 67–77 (EEGGNPDEIEV) are compositionally biased toward acidic residues. Ser79 bears the Phosphoserine mark. Residues 98–118 (EGVEDNGLEENSGDGQEDVET) show a composition bias toward acidic residues. Glycyl lysine isopeptide (Lys-Gly) (interchain with G-Cter in SUMO2) cross-links involve residues Lys171 and Lys185. A phosphoserine mark is found at Ser194, Ser196, and Ser208. 2 disordered regions span residues 205 to 304 (EEAS…TRCQ) and 316 to 430 (KREP…GRNF). The segment covering 224 to 233 (CKSEPVKEEG) has biased composition (basic and acidic residues). Lys230 participates in a covalent cross-link: Glycyl lysine isopeptide (Lys-Gly) (interchain with G-Cter in SUMO). Residues 267–287 (EEEEEEEEEEEQEEEQEEEGD) show a composition bias toward acidic residues. Lys316 is covalently cross-linked (Glycyl lysine isopeptide (Lys-Gly) (interchain with G-Cter in SUMO)). The segment covering 341–356 (EQSSTAAQLPETTSQE) has biased composition (polar residues). A compositionally biased stretch (basic and acidic residues) spans 368-380 (EPRDSKDDVKKFA). Residue Lys403 forms a Glycyl lysine isopeptide (Lys-Gly) (interchain with G-Cter in SUMO2) linkage. Phosphoserine occurs at positions 405 and 406. Positions 412-423 (DTKRLSREEKGR) are enriched in basic and acidic residues. Residue Lys414 forms a Glycyl lysine isopeptide (Lys-Gly) (interchain with G-Cter in SUMO2) linkage. Residues 428-506 (RNFWVSGLSS…KMISVEKAKS (79 aa)) form the RRM domain. Ser437 carries the post-translational modification Phosphoserine. Composition is skewed to basic and acidic residues over residues 500 to 573 (SVEK…ERSR) and 581 to 592 (GTERTVVMDKSK). Disordered regions lie at residues 500 to 663 (SVEK…WERE), 691 to 720 (RLERERMHVEQERRREQERIHREREELRRQ), 759 to 843 (RYHS…PRRD), and 872 to 931 (RWQG…QQTQ). Glycyl lysine isopeptide (Lys-Gly) (interchain with G-Cter in SUMO2) cross-links involve residues Lys505, Lys536, Lys565, and Lys592. Positions 550–816 (TDDGSTEKSK…RHGGPERHGR (267 aa)) are interaction with POLR2A; SFRS1; SFRS9 and SFRS10. Lys600 is covalently cross-linked (Glycyl lysine isopeptide (Lys-Gly) (interchain with G-Cter in SUMO1); alternate). A Glycyl lysine isopeptide (Lys-Gly) (interchain with G-Cter in SUMO2); alternate cross-link involves residue Lys600. Phosphoserine occurs at positions 602, 604, 623, and 626. Residues 603–663 (GSKERASKSQ…QRLQAQWERE (61 aa)) are compositionally biased toward basic and acidic residues. The Nuclear localization signal motif lies at 621–638 (KRSVVSFDKVKESRKSRD). Lys629 bears the N6-acetyllysine mark. Residues 759 to 820 (RYHSDFSRQD…PERHGRDSRD (62 aa)) are compositionally biased toward basic and acidic residues. At Arg834 the chain carries Omega-N-methylarginine. 4 positions are modified to asymmetric dimethylarginine: Arg892, Arg898, Arg908, and Arg914.

As to quaternary structure, monomer and homodimer. Interacts with KHDRBS3. Interacts with CLK2. Interacts with POLR2A, ASF/SRSF1, SRp30c/SRFS9 and TRA2B/SFRS10. Interacts with SRPK1 and inhibits its activity. Interacts with RBMX. Interacts with FUS. Interacts with ZBED4. Post-translationally, phosphorylated by CDC-like kinase 2 (CLK2). In terms of processing, sumoylated by PIAS1 with SUMO1 and SUMO2/3, desumoylated by SENP1. Sumoylation is required for transcriptional repressor activity.

Its subcellular location is the nucleus. Its function is as follows. Binds to scaffold/matrix attachment region (S/MAR) DNA and forms a molecular assembly point to allow the formation of a 'transcriptosomal' complex (consisting of SR proteins and RNA polymerase II) coupling transcription and RNA processing. Functions as an estrogen receptor corepressor and can also bind to the HSP27 promoter and decrease its transcription. Thereby acts as a negative regulator of cell proliferation. When associated with RBMX, binds to and stimulates transcription from the SREBF1 promoter. This chain is Scaffold attachment factor B1 (Safb), found in Rattus norvegicus (Rat).